A 418-amino-acid polypeptide reads, in one-letter code: Serine protease inhibitor A3N (418 aa).

The first 29 residues, 1–29 (MTRLVTLELLMAGIGSALLCFPDCILGED), serve as a signal peptide directing secretion. Residue serine 93 is modified to Phosphoserine. N-linked (GlcNAc...) asparagine glycosylation is found at asparagine 104, asparagine 258, and asparagine 269. Positions 367–394 (GTEAAAATGVKFVPMSAKLDPLIIAFDR) are RCL.

Belongs to the serpin family. N-glycosylated. Liver.

The protein resides in the secreted. In Rattus norvegicus (Rat), this protein is Serine protease inhibitor A3N (Serpina3n).